Here is a 175-residue protein sequence, read N- to C-terminus: ATP synthase subunit delta (175 aa).

This sequence belongs to the ATPase delta chain family. As to quaternary structure, F-type ATPases have 2 components, F(1) - the catalytic core - and F(0) - the membrane proton channel. F(1) has five subunits: alpha(3), beta(3), gamma(1), delta(1), epsilon(1). F(0) has three main subunits: a(1), b(2) and c(10-14). The alpha and beta chains form an alternating ring which encloses part of the gamma chain. F(1) is attached to F(0) by a central stalk formed by the gamma and epsilon chains, while a peripheral stalk is formed by the delta and b chains.

The protein localises to the cell inner membrane. F(1)F(0) ATP synthase produces ATP from ADP in the presence of a proton or sodium gradient. F-type ATPases consist of two structural domains, F(1) containing the extramembraneous catalytic core and F(0) containing the membrane proton channel, linked together by a central stalk and a peripheral stalk. During catalysis, ATP synthesis in the catalytic domain of F(1) is coupled via a rotary mechanism of the central stalk subunits to proton translocation. Its function is as follows. This protein is part of the stalk that links CF(0) to CF(1). It either transmits conformational changes from CF(0) to CF(1) or is implicated in proton conduction. This chain is ATP synthase subunit delta, found in Xylella fastidiosa (strain M23).